The chain runs to 80 residues: Acyl carrier protein (80 aa).

Residues 4–79 (EAILEKVRSI…DAVKYIEDKQ (76 aa)) enclose the Carrier domain. At Ser-39 the chain carries O-(pantetheine 4'-phosphoryl)serine.

It belongs to the acyl carrier protein (ACP) family. In terms of processing, 4'-phosphopantetheine is transferred from CoA to a specific serine of apo-ACP by AcpS. This modification is essential for activity because fatty acids are bound in thioester linkage to the sulfhydryl of the prosthetic group.

Its subcellular location is the cytoplasm. Its pathway is lipid metabolism; fatty acid biosynthesis. Carrier of the growing fatty acid chain in fatty acid biosynthesis. This is Acyl carrier protein from Synechococcus sp. (strain CC9902).